The primary structure comprises 452 residues: Tubulin alpha-2/alpha-4 chain (452 aa).

Residue glutamine 11 participates in GTP binding. Residue lysine 40 is modified to N6-acetyllysine. 7 residues coordinate GTP: glutamate 71, serine 140, glycine 144, threonine 145, threonine 179, asparagine 206, and asparagine 228. Glutamate 71 contributes to the Mg(2+) binding site. Glutamate 254 is a catalytic residue. Residues 432 to 452 (YEEVGVDSVEGEGEEEGGEEY) form a disordered region.

The protein belongs to the tubulin family. As to quaternary structure, dimer of alpha and beta chains. A typical microtubule is a hollow water-filled tube with an outer diameter of 25 nm and an inner diameter of 15 nM. Alpha-beta heterodimers associate head-to-tail to form protofilaments running lengthwise along the microtubule wall with the beta-tubulin subunit facing the microtubule plus end conferring a structural polarity. Microtubules usually have 13 protofilaments but different protofilament numbers can be found in some organisms and specialized cells. Requires Mg(2+) as cofactor. Undergoes a tyrosination/detyrosination cycle, the cyclic removal and re-addition of a C-terminal tyrosine residue by the enzymes tubulin tyrosine carboxypeptidase (TTCP) and tubulin tyrosine ligase (TTL), respectively. In terms of processing, acetylation of alpha chains at Lys-40 stabilizes microtubules and affects affinity and processivity of microtubule motors. This modification has a role in multiple cellular functions, ranging from cell motility, cell cycle progression or cell differentiation to intracellular trafficking and signaling.

It is found in the cytoplasm. The protein resides in the cytoskeleton. It carries out the reaction GTP + H2O = GDP + phosphate + H(+). Functionally, tubulin is the major constituent of microtubules, a cylinder consisting of laterally associated linear protofilaments composed of alpha- and beta-tubulin heterodimers. Microtubules grow by the addition of GTP-tubulin dimers to the microtubule end, where a stabilizing cap forms. Below the cap, tubulin dimers are in GDP-bound state, owing to GTPase activity of alpha-tubulin. In Patella vulgata (Common limpet), this protein is Tubulin alpha-2/alpha-4 chain (TUB2).